The sequence spans 88 residues: Small ribosomal subunit protein bS20 (88 aa).

The disordered stretch occupies residues 1–26; the sequence is MANTAQARKRARQNTKRRQNSASQRS. Over residues 7–19 the composition is skewed to basic residues; that stretch reads ARKRARQNTKRRQ.

Belongs to the bacterial ribosomal protein bS20 family.

In terms of biological role, binds directly to 16S ribosomal RNA. The protein is Small ribosomal subunit protein bS20 of Psychrobacter cryohalolentis (strain ATCC BAA-1226 / DSM 17306 / VKM B-2378 / K5).